The sequence spans 832 residues: Alpha-glucan phosphorylase, H isozyme (832 aa).

The residue at position 678 (K678) is an N6-(pyridoxal phosphate)lysine.

This sequence belongs to the glycogen phosphorylase family. The cofactor is pyridoxal 5'-phosphate.

It localises to the cytoplasm. The catalysed reaction is [(1-&gt;4)-alpha-D-glucosyl](n) + phosphate = [(1-&gt;4)-alpha-D-glucosyl](n-1) + alpha-D-glucose 1-phosphate. In terms of biological role, phosphorylase is an important allosteric enzyme in carbohydrate metabolism. Enzymes from different sources differ in their regulatory mechanisms and in their natural substrates. However, all known phosphorylases share catalytic and structural properties. The protein is Alpha-glucan phosphorylase, H isozyme of Triticum aestivum (Wheat).